A 563-amino-acid chain; its full sequence is Src substrate protein p85 (563 aa).

Cortactin repeat units lie at residues 89–125 (ASHG…SQVD), 126–162 (SVKG…SQKD), 163–199 (YSSG…SQKD), 200–236 (YSKG…SQKD), 237–273 (YVKG…SQKD), and 274–310 (YKSG…SQQD). The stretch at 311 to 333 (YSKGFGGKYGVQKDRMDKNAATF) is one Cortactin 7; truncated repeat. The segment at 331–477 (ATFEDIEKPT…EAVSQREAEY (147 aa)) is disordered. Residues 349–410 (VERVANKTSS…EEQAKAKKQT (62 aa)) adopt a coiled-coil conformation. Basic and acidic residues predominate over residues 366–405 (LAKEKEQEDRRKAEAERAQRMAREKQEQEEARRKLEEQAK). Residues 505-563 (ELGITAIALYDYQAAGDDEISFDPDDIITNIEMIDDGWWRGVCKGRYGLFPANYVELRQ) enclose the SH3 domain.

Post-translationally, acetylated. In terms of processing, in normal cells, appears to be phosphorylated on serine and threonine; in cells expressing activated forms of pp60-src, they become heavily phosphorylated on tyrosine in vitro. Tyrosine phosphorylation in transformed cells may contribute to cellular growth regulation and transformation.

The protein localises to the cytoplasm. Its subcellular location is the cytoskeleton. It localises to the cell projection. The protein resides in the lamellipodium. It is found in the ruffle. The protein localises to the dendrite. Its subcellular location is the cell membrane. It localises to the podosome. The protein resides in the cell junction. It is found in the focal adhesion. The protein localises to the membrane. Its subcellular location is the clathrin-coated pit. It localises to the dendritic spine. The protein resides in the cell cortex. It is found in the endoplasmic reticulum. Contributes to the organization of the actin cytoskeleton and cell shape. Plays a role in the formation of lamellipodia and in cell migration. Plays a role in the regulation of neuron morphology, axon growth and formation of neuronal growth cones, and may play a role in the regulation of neuronal spine density. Plays a role in focal adhesion assembly and turnover. Plays a role in intracellular protein transport and endocytosis, and in modulating the levels of potassium channels present at the cell membrane. Plays a role in endocytosis via clathrin-coated pits. This chain is Src substrate protein p85 (CTTN1), found in Gallus gallus (Chicken).